The primary structure comprises 734 residues: Origin of replication complex subunit 3 (734 aa).

2 disordered regions span residues 1–25 (MAPSGTVADPPQCSTTDSFNSSDTA) and 532–554 (GQRQGLPNSPKKHASRSNSKLEK). The span at 12–24 (QCSTTDSFNSSDT) shows a compositional bias: polar residues.

This sequence belongs to the ORC3 family. In terms of assembly, component of the origin recognition complex (ORC) composed of at least ORC1 (ORC1A or ORC1B), ORC2, ORC3, ORC4, ORC5 and ORC6. ORC is regulated in a cell-cycle and development dependent manner. It is sequentially assembled at the exit from anaphase of mitosis and disassembled as cells enter S phase. Interacts directly with ORC1A, ORC2, ORC4, ORC5 and ORC6. Follow a cell-cycle regulation with a peak at the G1/S-phase. Mostly expressed in siliques and flowers, and, to a lower exent, in flower buds, leaves, roots and stems.

It is found in the nucleus. In terms of biological role, component of the origin recognition complex (ORC) that binds origins of replication. DNA-binding is ATP-dependent. The specific DNA sequences that define origins of replication have not been identified yet. In Arabidopsis thaliana (Mouse-ear cress), this protein is Origin of replication complex subunit 3.